We begin with the raw amino-acid sequence, 181 residues long: Inner membrane-spanning protein YciB (181 aa).

A run of 5 helical transmembrane segments spans residues 22–42 (IYTA…LTYV), 50–70 (MQLI…FLHD), 80–100 (IVYA…RPII), 118–138 (INYA…YVAF), and 148–168 (FKVF…GMYV).

Belongs to the YciB family.

It localises to the cell inner membrane. In terms of biological role, plays a role in cell envelope biogenesis, maintenance of cell envelope integrity and membrane homeostasis. This is Inner membrane-spanning protein YciB from Aliivibrio salmonicida (strain LFI1238) (Vibrio salmonicida (strain LFI1238)).